Consider the following 86-residue polypeptide: Large ribosomal subunit protein uL24c (86 aa).

The protein belongs to the universal ribosomal protein uL24 family. Part of the 50S ribosomal subunit.

Its subcellular location is the plastid. The protein localises to the chloroplast. Functionally, one of two assembly initiator proteins, it binds directly to the 5'-end of the 23S rRNA, where it nucleates assembly of the 50S subunit. This Heterosigma akashiwo (strain NIES-293 / 8280G21-1) protein is Large ribosomal subunit protein uL24c (rpl24).